The following is a 439-amino-acid chain: Ribosomal protein uS12 methylthiotransferase RimO (439 aa).

Residues 3 to 113 (HKVGFVSLGC…VVNAVHQHLP (111 aa)) enclose the MTTase N-terminal domain. Cysteine 12, cysteine 48, cysteine 77, cysteine 144, cysteine 148, and cysteine 151 together coordinate [4Fe-4S] cluster. One can recognise a Radical SAM core domain in the interval 130-367 (LTPRHYAYLK…MQVQAEISRN (238 aa)). In terms of domain architecture, TRAM spans 370–436 (KNKIGSTQTV…DYDLYGDLEY (67 aa)).

It belongs to the methylthiotransferase family. RimO subfamily. It depends on [4Fe-4S] cluster as a cofactor.

It localises to the cytoplasm. It catalyses the reaction L-aspartate(89)-[ribosomal protein uS12]-hydrogen + (sulfur carrier)-SH + AH2 + 2 S-adenosyl-L-methionine = 3-methylsulfanyl-L-aspartate(89)-[ribosomal protein uS12]-hydrogen + (sulfur carrier)-H + 5'-deoxyadenosine + L-methionine + A + S-adenosyl-L-homocysteine + 2 H(+). Its function is as follows. Catalyzes the methylthiolation of an aspartic acid residue of ribosomal protein uS12. In Legionella pneumophila (strain Corby), this protein is Ribosomal protein uS12 methylthiotransferase RimO.